The primary structure comprises 154 residues: Small ribosomal subunit protein uS7 (154 aa).

This sequence belongs to the universal ribosomal protein uS7 family. As to quaternary structure, part of the 30S ribosomal subunit. Contacts proteins S9 and S11.

Its function is as follows. One of the primary rRNA binding proteins, it binds directly to 16S rRNA where it nucleates assembly of the head domain of the 30S subunit. Is located at the subunit interface close to the decoding center, probably blocks exit of the E-site tRNA. In Karelsulcia muelleri (strain GWSS) (Sulcia muelleri), this protein is Small ribosomal subunit protein uS7.